The chain runs to 422 residues: Dihydroorotase (422 aa).

Residues histidine 59 and histidine 61 each coordinate Zn(2+). Substrate-binding positions include 61–63 (HFR) and asparagine 93. The Zn(2+) site is built by aspartate 150, histidine 177, and histidine 230. Position 276 (asparagine 276) interacts with substrate. Position 303 (aspartate 303) interacts with Zn(2+). The active site involves aspartate 303. Histidine 307 is a binding site for substrate.

Belongs to the metallo-dependent hydrolases superfamily. DHOase family. Class I DHOase subfamily. Zn(2+) serves as cofactor.

The enzyme catalyses (S)-dihydroorotate + H2O = N-carbamoyl-L-aspartate + H(+). It participates in pyrimidine metabolism; UMP biosynthesis via de novo pathway; (S)-dihydroorotate from bicarbonate: step 3/3. In terms of biological role, catalyzes the reversible cyclization of carbamoyl aspartate to dihydroorotate. This Streptococcus pyogenes serotype M3 (strain ATCC BAA-595 / MGAS315) protein is Dihydroorotase.